Consider the following 520-residue polypeptide: Glutamate--cysteine ligase (520 aa).

The protein belongs to the glutamate--cysteine ligase type 1 family. Type 1 subfamily.

The catalysed reaction is L-cysteine + L-glutamate + ATP = gamma-L-glutamyl-L-cysteine + ADP + phosphate + H(+). It participates in sulfur metabolism; glutathione biosynthesis; glutathione from L-cysteine and L-glutamate: step 1/2. The polypeptide is Glutamate--cysteine ligase (Leptospira interrogans serogroup Icterohaemorrhagiae serovar copenhageni (strain Fiocruz L1-130)).